A 592-amino-acid polypeptide reads, in one-letter code: Putative phosphatidylinositol 4-kinase alpha-like protein P2 (592 aa).

The interval 180 to 318 (EQLVEENTGS…ISWQAAIFKL (139 aa)) is pleckstrin homology (PH) domain conferring phosphoinositide binding specificity. The region spanning 275–576 (KVKRCGVSEL…VIQSCFLSNR (302 aa)) is the PI3K/PI4K catalytic domain. Residues 281–287 (VSELEKE) are G-loop. The catalytic loop stretch occupies residues 441-449 (QIKDRHNGN). The activation loop stretch occupies residues 460 to 484 (HIDFGFMFESSPGGNLGWEPDIKLT).

Belongs to the PI3/PI4-kinase family. Type III PI4K subfamily.

The protein is Putative phosphatidylinositol 4-kinase alpha-like protein P2 (PI4KAP2) of Homo sapiens (Human).